We begin with the raw amino-acid sequence, 184 residues long: ATP synthase subunit b, chloroplastic (184 aa).

The chain crosses the membrane as a helical span at residues 27–49; the sequence is LATNPINLSVVLGVLIFFGKGVL.

Belongs to the ATPase B chain family. As to quaternary structure, F-type ATPases have 2 components, F(1) - the catalytic core - and F(0) - the membrane proton channel. F(1) has five subunits: alpha(3), beta(3), gamma(1), delta(1), epsilon(1). F(0) has four main subunits: a(1), b(1), b'(1) and c(10-14). The alpha and beta chains form an alternating ring which encloses part of the gamma chain. F(1) is attached to F(0) by a central stalk formed by the gamma and epsilon chains, while a peripheral stalk is formed by the delta, b and b' chains.

The protein resides in the plastid. Its subcellular location is the chloroplast thylakoid membrane. Functionally, f(1)F(0) ATP synthase produces ATP from ADP in the presence of a proton or sodium gradient. F-type ATPases consist of two structural domains, F(1) containing the extramembraneous catalytic core and F(0) containing the membrane proton channel, linked together by a central stalk and a peripheral stalk. During catalysis, ATP synthesis in the catalytic domain of F(1) is coupled via a rotary mechanism of the central stalk subunits to proton translocation. Its function is as follows. Component of the F(0) channel, it forms part of the peripheral stalk, linking F(1) to F(0). This is ATP synthase subunit b, chloroplastic from Nicotiana sylvestris (Wood tobacco).